Consider the following 636-residue polypeptide: 1-deoxy-D-xylulose-5-phosphate synthase (636 aa).

Thiamine diphosphate contacts are provided by residues H72 and 113–115; that span reads GHA. D144 lines the Mg(2+) pocket. Residues 145–146, N174, Y287, and E370 each bind thiamine diphosphate; that span reads GS. N174 serves as a coordination point for Mg(2+).

This sequence belongs to the transketolase family. DXPS subfamily. Homodimer. It depends on Mg(2+) as a cofactor. Thiamine diphosphate is required as a cofactor.

It catalyses the reaction D-glyceraldehyde 3-phosphate + pyruvate + H(+) = 1-deoxy-D-xylulose 5-phosphate + CO2. It participates in metabolic intermediate biosynthesis; 1-deoxy-D-xylulose 5-phosphate biosynthesis; 1-deoxy-D-xylulose 5-phosphate from D-glyceraldehyde 3-phosphate and pyruvate: step 1/1. In terms of biological role, catalyzes the acyloin condensation reaction between C atoms 2 and 3 of pyruvate and glyceraldehyde 3-phosphate to yield 1-deoxy-D-xylulose-5-phosphate (DXP). The sequence is that of 1-deoxy-D-xylulose-5-phosphate synthase from Synechococcus sp. (strain ATCC 27144 / PCC 6301 / SAUG 1402/1) (Anacystis nidulans).